The primary structure comprises 240 residues: UDP-2,3-diacylglucosamine hydrolase (240 aa).

Positions 8, 10, 41, 79, and 114 each coordinate Mn(2+). 79–80 (NR) provides a ligand contact to substrate. Substrate is bound by residues Asp122, Ser160, Asn164, Lys167, and His195. Mn(2+) is bound by residues His195 and His197.

It belongs to the LpxH family. Mn(2+) serves as cofactor.

The protein localises to the cell inner membrane. It catalyses the reaction UDP-2-N,3-O-bis[(3R)-3-hydroxytetradecanoyl]-alpha-D-glucosamine + H2O = 2-N,3-O-bis[(3R)-3-hydroxytetradecanoyl]-alpha-D-glucosaminyl 1-phosphate + UMP + 2 H(+). Its pathway is glycolipid biosynthesis; lipid IV(A) biosynthesis; lipid IV(A) from (3R)-3-hydroxytetradecanoyl-[acyl-carrier-protein] and UDP-N-acetyl-alpha-D-glucosamine: step 4/6. Its function is as follows. Hydrolyzes the pyrophosphate bond of UDP-2,3-diacylglucosamine to yield 2,3-diacylglucosamine 1-phosphate (lipid X) and UMP by catalyzing the attack of water at the alpha-P atom. Involved in the biosynthesis of lipid A, a phosphorylated glycolipid that anchors the lipopolysaccharide to the outer membrane of the cell. The polypeptide is UDP-2,3-diacylglucosamine hydrolase (Escherichia coli O127:H6 (strain E2348/69 / EPEC)).